The following is a 316-amino-acid chain: tRNA dimethylallyltransferase (316 aa).

27–34 serves as a coordination point for ATP; the sequence is GATATGKT. 29–34 serves as a coordination point for substrate; that stretch reads TATGKT. Positions 52 to 55 are interaction with substrate tRNA; the sequence is DSRQ.

Belongs to the IPP transferase family. As to quaternary structure, monomer. Mg(2+) serves as cofactor.

It catalyses the reaction adenosine(37) in tRNA + dimethylallyl diphosphate = N(6)-dimethylallyladenosine(37) in tRNA + diphosphate. Functionally, catalyzes the transfer of a dimethylallyl group onto the adenine at position 37 in tRNAs that read codons beginning with uridine, leading to the formation of N6-(dimethylallyl)adenosine (i(6)A). The sequence is that of tRNA dimethylallyltransferase from Treponema pallidum (strain Nichols).